The chain runs to 660 residues: MAGIESVLQETRVFEPPASFVKQANIAGMDAYRTLCAEAERDYEGFWARLAHEHLLWHKPFSKVLDESRAPFYTWFEDGELNASYNCLERNLENGNADKVAVIFEADDGSVARITYRELHARVCRFANGLKALGIRKGDRVVIYMPMSIEGVVAMQACARIGATHSVVFGGFSAKSLQERIVDVGAVAVITADEQMRGGKALPLKAIADEALAMEGSEAVRHVIVYRRTGAGVNWVEGRDRAMDEVEAGQPDTCEVTPVGAEHPLFILYTSGSTGKPKGVQHSTGGYLLWALLTMQWTFDLKPDDVFWCTADIGWVTGHTYIAYGPLAAGATQVVFEGVPTYPNAGRFWDMIQKHRVNTFYTAPTAIRSLIKAAEADETSHPKRYDLSSLRLLGTVGEPINPEAWMWYHTNIGGGRCPIVDTFWQTETGGHMISPLPGATPLVPGSCTLPLPGIMAAIVDETGQDLPDGQGGILVVKRPWPAMIRTIWGDPERFRKSYFPAELGGKLYLAGDGSVRDKETGYFTIMGRIDDVLNVSGHRMGTMEIESALVANPLVAEAAVVGRPDDMTGEAICAFVVLKRTRPNGDEARQIATDLRNWVGKEIGPIAKPKDIRFGDNLPKTRSGKIMRRLLRSIAKGEDITQDTSTLENPAILEQLKEAR.

CoA-binding positions include 197–200 (RGGK) and Thr317. ATP is bound by residues 397–399 (GEP), 421–426 (DTFWQT), Asp512, and Arg528. A CoA-binding site is contributed by Ser536. Residue Arg539 participates in ATP binding. The Mg(2+) site is built by Val550 and Val555. Lys625 bears the N6-acetyllysine mark.

This sequence belongs to the ATP-dependent AMP-binding enzyme family. It depends on Mg(2+) as a cofactor. Post-translationally, acetylated. Deacetylation by the SIR2-homolog deacetylase activates the enzyme.

The catalysed reaction is acetate + ATP + CoA = acetyl-CoA + AMP + diphosphate. Catalyzes the conversion of acetate into acetyl-CoA (AcCoA), an essential intermediate at the junction of anabolic and catabolic pathways. AcsA undergoes a two-step reaction. In the first half reaction, AcsA combines acetate with ATP to form acetyl-adenylate (AcAMP) intermediate. In the second half reaction, it can then transfer the acetyl group from AcAMP to the sulfhydryl group of CoA, forming the product AcCoA. In Ralstonia nicotianae (strain ATCC BAA-1114 / GMI1000) (Ralstonia solanacearum), this protein is Acetyl-coenzyme A synthetase.